A 382-amino-acid polypeptide reads, in one-letter code: Lipid-A-disaccharide synthase (382 aa).

It belongs to the LpxB family.

It catalyses the reaction 2-N,3-O-bis[(3R)-3-hydroxytetradecanoyl]-alpha-D-glucosaminyl 1-phosphate + UDP-2-N,3-O-bis[(3R)-3-hydroxytetradecanoyl]-alpha-D-glucosamine = lipid A disaccharide (E. coli) + UDP + H(+). It carries out the reaction a lipid X + a UDP-2-N,3-O-bis[(3R)-3-hydroxyacyl]-alpha-D-glucosamine = a lipid A disaccharide + UDP + H(+). Its pathway is glycolipid biosynthesis; lipid IV(A) biosynthesis; lipid IV(A) from (3R)-3-hydroxytetradecanoyl-[acyl-carrier-protein] and UDP-N-acetyl-alpha-D-glucosamine: step 5/6. Functionally, condensation of UDP-2,3-diacylglucosamine and 2,3-diacylglucosamine-1-phosphate to form lipid A disaccharide, a precursor of lipid A, a phosphorylated glycolipid that anchors the lipopolysaccharide to the outer membrane of the cell. The protein is Lipid-A-disaccharide synthase of Escherichia coli O157:H7.